The chain runs to 568 residues: Glucose-6-phosphate isomerase, cytosolic 1 (568 aa).

Glu360 (proton donor) is an active-site residue. Residues His391 and Lys516 contribute to the active site.

It belongs to the GPI family. Homodimer.

It is found in the cytoplasm. The catalysed reaction is alpha-D-glucose 6-phosphate = beta-D-fructose 6-phosphate. Its pathway is carbohydrate degradation; glycolysis; D-glyceraldehyde 3-phosphate and glycerone phosphate from D-glucose: step 2/4. This Clarkia xantiana (Gunsight clarkia) protein is Glucose-6-phosphate isomerase, cytosolic 1 (PGIC1).